Reading from the N-terminus, the 177-residue chain is UPF0200 protein STK_09500 (177 aa).

ATP is bound at residue 11 to 18; sequence GMPGSGKG.

This sequence belongs to the UPF0200 family.

The sequence is that of UPF0200 protein STK_09500 from Sulfurisphaera tokodaii (strain DSM 16993 / JCM 10545 / NBRC 100140 / 7) (Sulfolobus tokodaii).